The following is a 119-amino-acid chain: DNA-binding protein inhibitor ID-3 (119 aa).

A bHLH domain is found at 28–80 (RGKGPAAEEPLSLLDDMNHCYSRLRELVPGVPRGTQLSQVEILQRVIDYILDL).

As to quaternary structure, homodimer, and heterodimer with other HLH proteins. Interacts with COPS5 and COPS7A. Interacts with IFI204. Interacts with GATA4 and NKX2-5. Interacts with ANKRD2; both proteins cooperate in myoblast differentiation. Interacts with CLOCK and BMAL1. In terms of tissue distribution, expressed abundantly in lung, kidney and adrenal gland, but not in adult brain.

It is found in the nucleus. Functionally, transcriptional regulator (lacking a basic DNA binding domain) which negatively regulates the basic helix-loop-helix (bHLH) transcription factors by forming heterodimers and inhibiting their DNA binding and transcriptional activity. Implicated in regulating a variety of cellular processes, including cellular growth, senescence, differentiation, apoptosis, angiogenesis, and neoplastic transformation. Involved in myogenesis by inhibiting skeletal muscle and cardiac myocyte differentiation and promoting muscle precursor cells proliferation. Inhibits the binding of E2A-containing protein complexes to muscle creatine kinase E-box enhancer. Regulates the circadian clock by repressing the transcriptional activator activity of the CLOCK-BMAL1 heterodimer. This is DNA-binding protein inhibitor ID-3 (ID3) from Homo sapiens (Human).